A 107-amino-acid polypeptide reads, in one-letter code: U1-lycotoxin-Ls1q (107 aa).

An N-terminal signal peptide occupies residues 1-20 (MMKVLVVVALLVTLISYSSS). A propeptide spanning residues 21-41 (EGIDDLEADELLSLMANEQTR) is cleaved from the precursor. Intrachain disulfides connect Cys-44–Cys-59, Cys-51–Cys-68, Cys-58–Cys-86, and Cys-70–Cys-84.

Belongs to the neurotoxin 19 (CSTX) family. 04 (U1-Lctx) subfamily. As to expression, expressed by the venom gland.

The protein localises to the secreted. This is U1-lycotoxin-Ls1q from Lycosa singoriensis (Wolf spider).